Reading from the N-terminus, the 486-residue chain is Nuclear distribution protein PAC1 (486 aa).

Residues 66–99 (STVLRLQKKIIDLENEISNLNNIINSTNSDNNGI) are a coiled coil. WD repeat units lie at residues 119-158 (QCEN…NTIP), 164-205 (AHTR…RTLN), 206-246 (GHEH…SLKS), 249-291 (GHSE…GVAM), 294-328 (GHSH…FPTI), 329-368 (PLEL…IAPH), 389-428 (GHSS…ETGY), and 437-483 (GHDG…NSIK).

The protein belongs to the WD repeat LIS1/nudF family. As to quaternary structure, self-associates. Interacts with NDL1 and dynein.

The protein resides in the cytoplasm. It is found in the cytoskeleton. Its subcellular location is the spindle pole. Its function is as follows. Positively regulates the activity of the minus-end directed microtubule motor protein dynein. Plays a central role in positioning the mitotic spindle at the bud neck during cell division. Targets cytoplasmic dynein to microtubule plus ends, thereby promoting dynein-mediated microtubule sliding along the bud cortex and consequently the movement of the mitotic spindle to the bud neck. The sequence is that of Nuclear distribution protein PAC1 from Candida albicans (strain SC5314 / ATCC MYA-2876) (Yeast).